Reading from the N-terminus, the 431-residue chain is Methionine aminopeptidase 2-2 (431 aa).

Residues 1–76 (MAAQASEKLQ…PPRVPLSTLF (76 aa)) are disordered. Over residues 35 to 47 (EAEDDSDDDEVED) the composition is skewed to acidic residues. Residue His-184 participates in substrate binding. The a divalent metal cation site is built by Asp-204, Asp-215, and His-284. His-292 is a substrate binding site. Glu-317 and Glu-412 together coordinate a divalent metal cation.

The protein belongs to the peptidase M24A family. Methionine aminopeptidase eukaryotic type 2 subfamily. It depends on Co(2+) as a cofactor. Requires Zn(2+) as cofactor. Mn(2+) is required as a cofactor. The cofactor is Fe(2+).

The protein localises to the cytoplasm. The enzyme catalyses Release of N-terminal amino acids, preferentially methionine, from peptides and arylamides.. Cotranslationally removes the N-terminal methionine from nascent proteins. The N-terminal methionine is often cleaved when the second residue in the primary sequence is small and uncharged (Met-Ala-, Cys, Gly, Pro, Ser, Thr, or Val). This Aspergillus niger (strain ATCC MYA-4892 / CBS 513.88 / FGSC A1513) protein is Methionine aminopeptidase 2-2.